We begin with the raw amino-acid sequence, 325 residues long: Protein FAM50B (325 aa).

Ala-2 carries the N-acetylalanine modification. A disordered region spans residues 137–160 (RRAGNLGKNPDVDTSFLPDRDREE).

Belongs to the FAM50 family.

This is Protein FAM50B (FAM50B) from Macaca fascicularis (Crab-eating macaque).